The following is a 443-amino-acid chain: Monooxygenase asqM (443 aa).

It belongs to the aromatic-ring hydroxylase family. FAD is required as a cofactor.

It participates in secondary metabolite biosynthesis. The protein operates within alkaloid biosynthesis. It functions in the pathway mycotoxin biosynthesis. In terms of biological role, monooxygenase; part of the gene cluster that mediates the biosynthesis of the aspoquinolone mycotoxins. The role of asqM within the aspoquinolone pathway has still to be determined. The first step of the pathway is catalyzed by the nonribosomal peptide synthetase asqK that condenses anthranilic acid and O-methyl-L-tyrosine to produce 4'-methoxycyclopeptin. 4'-methoxycyclopeptin is then converted to 4'-methoxydehydrocyclopeptin by the ketoglutarate-dependent dioxygenase asqJ. AsqJ also converts its first product 4'-methoxydehydrocyclopeptin to 4'-methoxycyclopenin. The following conversion of 4'-methoxycyclopenin into 4'-methoxyviridicatin is catalyzed by the cyclopenase asqI. 4'-methoxyviridicatin is the precursor of quinolone natural products, and is further converted to quinolinone B. The prenyltransferase asqH1 then catalyzes the canonical Friedel-Crafts alkylation of quinolinone B with dimethylallyl cation to yield dimethylallyl quinolone, which is subjected to FAD-dependent dehydrogenation by the FAD-linked oxidoreductase asqF to yield conjugated aryl diene. The delta(3') double bond then serves as the site of the second alkylation with DMAPP catalyzed by the prenyltransferase asqH2 to yield a carbenium ion intermediate, which can be attacked by H(2)O to yield a styrenyl quinolone containing a C3'-hydroxyprenyl chain. The FAD-dependent monooxygenase asqG performs epoxidation of the terminal C7'-C8' olefin. Finally, after dehydratation of the epoxide at C3 by asqC, the quinolone epoxide rearrangement protein asqO catalyzes an enzymatic 3-exo-tet cyclization to yield the cyclopropyl-THF ring system in aspoquinolone. In Emericella nidulans (strain FGSC A4 / ATCC 38163 / CBS 112.46 / NRRL 194 / M139) (Aspergillus nidulans), this protein is Monooxygenase asqM.